A 280-amino-acid chain; its full sequence is MAVTAALVKELRERTGAGMMECKKALVETNGDVELAIENMRKSGAAKAAKKAGNVAAEGAIFIKEENGVAVLLEVNCQTDFVAKDGNFTAFAGKVAAEALASKASIEELQAKFEEERVALVAKIGENINIRRVQFVEGTALASYRHGEKIGVVVAGEGDAETLKHIAMHVAASRPEYVNPEDVPADVVAKEREVQVEIAMNEGKPKEIAEKMVEGRMKKFTGEVSLTGQPFVMEPKKSVAEILKERGASVVTFVRLEVGEGIEKAEGLSFAEEVALAQKG.

The involved in Mg(2+) ion dislocation from EF-Tu stretch occupies residues 79–82 (TDFV).

This sequence belongs to the EF-Ts family.

It is found in the cytoplasm. Its function is as follows. Associates with the EF-Tu.GDP complex and induces the exchange of GDP to GTP. It remains bound to the aminoacyl-tRNA.EF-Tu.GTP complex up to the GTP hydrolysis stage on the ribosome. This chain is Elongation factor Ts, found in Vibrio vulnificus (strain CMCP6).